Consider the following 253-residue polypeptide: Zinc finger protein GIS (253 aa).

Residues M1–T10 show a composition bias toward acidic residues. Positions M1–I85 are disordered. Composition is skewed to polar residues over residues Q11–Q21, S49–T63, and G76–I85. A C2H2-type zinc finger spans residues F91–H113.

In terms of tissue distribution, expressed in inflorescence meristems, floral meristems and stem epidermis.

Its subcellular location is the nucleus. Its function is as follows. Probable transcription factor required for the initiation of inflorescence trichomes in response to gibberellin (GA). Mediates the induction of GL1 expression by GA in inflorescence organs and is antagonized in its action by the DELLA repressor GAI. Acts upstream of the trichome initiation regulators GL1 and GL3, and downstream of the GA signaling repressor SPINDLY (SPY). Does not play a significant role in the cytokinin response. Controls trichome branching through GA signaling. Acts downstream of the key regulator STICHEL (STI) in an endoreduplication-independent pathway. Controls trichome cell division indirectly by acting downstream of a key endoreduplication regulator SIAMESE (SIM). The chain is Zinc finger protein GIS (GIS) from Arabidopsis thaliana (Mouse-ear cress).